Reading from the N-terminus, the 154-residue chain is Large ribosomal subunit protein uL15 (154 aa).

Residues 1 to 13 (MKLNELRDHEGAT) show a composition bias toward basic and acidic residues. The segment at 1–44 (MKLNELRDHEGATKNRKRIGRGIGSGTGKTGGCGVKGQKSRSGV) is disordered. Positions 21 to 35 (RGIGSGTGKTGGCGV) are enriched in gly residues.

The protein belongs to the universal ribosomal protein uL15 family. Part of the 50S ribosomal subunit.

In terms of biological role, binds to the 23S rRNA. This chain is Large ribosomal subunit protein uL15, found in Bartonella bacilliformis (strain ATCC 35685 / KC583 / Herrer 020/F12,63).